The chain runs to 425 residues: MSINNKQWLGLPLNLLWGYIAIAVFMTGDGFELAFLSHYIKALGFSPAEASFAFTLYGLAAALSAWISGVVAEIITPLKTMMIGFVLWCVFHVLFLVFGLGHANYALILLFYGIRGFAYPLFLYSFIVAIVHNVKSDNASSAIGWFWAVYSIGIGVFGSYIPSFTIPHIGEMGTLWLALAFCLTGGVIALVSLRHIQTPQHMQNLTTREKFSELGRAATLLYTNRNILLSSMVRIINTLSLFGFAVIMPMMFVDELGFSTSEWLQVWAVFFFTTIFSNVLWGILGEKLGWMKVVRWFGCIGMALSSLAFYYIPQHFGHSFAMALIPAIALGIFVAAFVPLAAVFPALEPKHKGAAISVYNLSAGMSNFLAPAIAVVLLPFFSTIGVVIAYTALYVVAFFLCAFIRVEQPGFSHKEATAREQVEFS.

Topologically, residues 1-7 are cytoplasmic; sequence MSINNKQ. Residues 8-28 form a helical membrane-spanning segment; it reads WLGLPLNLLWGYIAIAVFMTG. At 29–51 the chain is on the extracellular side; that stretch reads DGFELAFLSHYIKALGFSPAEAS. The helical transmembrane segment at 52-72 threads the bilayer; sequence FAFTLYGLAAALSAWISGVVA. At 73–80 the chain is on the cytoplasmic side; sequence EIITPLKT. Residues 81–101 form a helical membrane-spanning segment; it reads MMIGFVLWCVFHVLFLVFGLG. Residues 102 to 107 lie on the Extracellular side of the membrane; sequence HANYAL. The helical transmembrane segment at 108–128 threads the bilayer; sequence ILLFYGIRGFAYPLFLYSFIV. Topologically, residues 129-141 are cytoplasmic; the sequence is AIVHNVKSDNASS. The helical transmembrane segment at 142–162 threads the bilayer; sequence AIGWFWAVYSIGIGVFGSYIP. Residues 163–172 are Extracellular-facing; the sequence is SFTIPHIGEM. A helical membrane pass occupies residues 173–193; that stretch reads GTLWLALAFCLTGGVIALVSL. Over 194-237 the chain is Cytoplasmic; it reads RHIQTPQHMQNLTTREKFSELGRAATLLYTNRNILLSSMVRIIN. Residues 238 to 258 traverse the membrane as a helical segment; it reads TLSLFGFAVIMPMMFVDELGF. Over 259–263 the chain is Extracellular; sequence STSEW. A helical membrane pass occupies residues 264–284; that stretch reads LQVWAVFFFTTIFSNVLWGIL. Residues 285-295 lie on the Cytoplasmic side of the membrane; sequence GEKLGWMKVVR. The chain crosses the membrane as a helical span at residues 296–316; sequence WFGCIGMALSSLAFYYIPQHF. Residues 317 to 323 lie on the Extracellular side of the membrane; sequence GHSFAMA. The helical transmembrane segment at 324–344 threads the bilayer; it reads LIPAIALGIFVAAFVPLAAVF. Residues 345–360 are Cytoplasmic-facing; that stretch reads PALEPKHKGAAISVYN. The chain crosses the membrane as a helical span at residues 361–381; sequence LSAGMSNFLAPAIAVVLLPFF. The Extracellular segment spans residues 382–383; it reads ST. A helical transmembrane segment spans residues 384–404; that stretch reads IGVVIAYTALYVVAFFLCAFI. The Cytoplasmic portion of the chain corresponds to 405–425; the sequence is RVEQPGFSHKEATAREQVEFS.

The protein belongs to the major facilitator superfamily. Sugar transporter (TC 2.A.1.1) family. CsbX subfamily.

The protein localises to the cell membrane. The protein is D-arabinitol transporter (dalT) of Klebsiella pneumoniae.